The primary structure comprises 179 residues: Stathmin-2 (179 aa).

The membrane attachment stretch occupies residues 1–26; the sequence is MAKTAMAYKEKMKELSMLSLICSCFY. A phosphoserine mark is found at S16, S50, S62, S73, S80, and S97. The SLD domain maps to 38–179; the sequence is DDMEVKQINK…NKELQVELSG (142 aa). Residues 39 to 96 form a regulatory/phosphorylation domain region; that stretch reads DMEVKQINKRASGQAFELILKPPSPVSEAPRTLASPKKKELSLEEIQKKLEAAEERRK. A coiled-coil region spans residues 74–179; sequence PKKKELSLEE…NKELQVELSG (106 aa).

Belongs to the stathmin family. In terms of tissue distribution, expression is neuron-specific and found in cerebellum, forebrain, midbrain, tectum and spinal cord.

Its subcellular location is the cytoplasm. It localises to the perinuclear region. The protein localises to the cell projection. It is found in the growth cone. The protein resides in the membrane. Its subcellular location is the axon. It localises to the lamellipodium. Its function is as follows. Is a key regulator of neurite extension through regulation of microtubule instabilily. The polypeptide is Stathmin-2 (STMN2) (Gallus gallus (Chicken)).